Consider the following 406-residue polypeptide: MELRVANANGSCENGSIVSLYCSSQEVLCQIVRGISPEEPYNATLITWQERVRKKYGFYIGVGLAFLSCFLIGTSVILKKKGLIRLVATGATRAVNGGYGYLKDPMWWAGMATMSAGEVANFGAYAFAPATVVTPLGALSVLISAIFSSYCLGESLNLLGKLGCVICMAGSTVMVIHAPKEEKVTTVAEMASKMKDTGFIVFAVLLVVSCLILIFIVAPRYGQRNILIYIIICSVIGSFSVTAVKGLGVTIRNFFQGLPVVRHPLPYILSLILGLSIIIQVNFLNRALDIFNTSLVFPIYYVFFTTVVVASSIVLFKEWYTMSAVDIVGTLSGFVTIILGVFMLHAFKDLDINQISLPHTHKNPTPAPAPEPTVIKLEDKNVLVDNIELASTPSPQQKPKVFMTDS.

The Extracellular portion of the chain corresponds to M1–G57. N9, N14, and N42 each carry an N-linked (GlcNAc...) asparagine glycan. The chain crosses the membrane as a helical span at residues F58 to L78. The Cytoplasmic segment spans residues K79–A126. The helical transmembrane segment at F127–F147 threads the bilayer. Over S148 to S155 the chain is Extracellular. A helical transmembrane segment spans residues L156–I176. The Cytoplasmic segment spans residues H177–T197. Residues G198–A218 form a helical membrane-spanning segment. The Extracellular segment spans residues P219–N225. Residues I226–G246 traverse the membrane as a helical segment. The Cytoplasmic segment spans residues L247–H263. A helical membrane pass occupies residues P264–L284. Over N285–L295 the chain is Extracellular. N-linked (GlcNAc...) asparagine glycosylation is present at N292. A helical membrane pass occupies residues V296–F316. At K317–D326 the chain is on the cytoplasmic side. Residues I327–F347 traverse the membrane as a helical segment. The Extracellular segment spans residues K348–S406.

This sequence belongs to the NIPA family.

Its subcellular location is the cell membrane. It carries out the reaction Mg(2+)(in) = Mg(2+)(out). Its function is as follows. Acts as a Mg(2+) transporter. Can also transport other divalent cations such as Ba(2+), Sr(2+) and Fe(2+) but to a much less extent than Mg(2+). May be a receptor for ligands (trioxilins A3 and B3) from the hepoxilin pathway. The polypeptide is Magnesium transporter NIPA4 (Nipal4) (Mus musculus (Mouse)).